We begin with the raw amino-acid sequence, 366 residues long: Ferredoxin--NADP reductase (366 aa).

Positions 51, 59, 64, 104, 139, 308, and 349 each coordinate FAD.

The protein belongs to the ferredoxin--NADP reductase type 2 family. Homodimer. It depends on FAD as a cofactor.

The catalysed reaction is 2 reduced [2Fe-2S]-[ferredoxin] + NADP(+) + H(+) = 2 oxidized [2Fe-2S]-[ferredoxin] + NADPH. The chain is Ferredoxin--NADP reductase from Polaromonas sp. (strain JS666 / ATCC BAA-500).